A 660-amino-acid polypeptide reads, in one-letter code: Cysteine--tRNA ligase, cytoplasmic (660 aa).

Positions 1–10 (MSENSSPKLE) are enriched in polar residues. A disordered region spans residues 1–20 (MSENSSPKLESTSAAAASTK). Position 65 (C65) interacts with Zn(2+). The 'HIGH' region signature appears at 67–77 (PTVYDASHMGH). Positions 256, 281, and 285 each coordinate Zn(2+). A 'KMSKS' region motif is present at residues 314 to 318 (KMSKS). K317 contributes to the ATP binding site. 2 disordered regions span residues 563-584 (IEKKKQADKEEKEKKLKEKFEK) and 627-660 (QKEYDNQTKEHNNYLKSLSTSTSSPTLTSTQSPQ). Residues 627–639 (QKEYDNQTKEHNN) show a composition bias toward basic and acidic residues. The segment covering 643-660 (SLSTSTSSPTLTSTQSPQ) has biased composition (low complexity).

It belongs to the class-I aminoacyl-tRNA synthetase family. Requires Zn(2+) as cofactor.

Its subcellular location is the cytoplasm. The catalysed reaction is tRNA(Cys) + L-cysteine + ATP = L-cysteinyl-tRNA(Cys) + AMP + diphosphate. This chain is Cysteine--tRNA ligase, cytoplasmic (cysS), found in Dictyostelium discoideum (Social amoeba).